Here is a 237-residue protein sequence, read N- to C-terminus: Octopine transport system permease protein OccQ (237 aa).

Residues 22–222 form the ABC transmembrane type-1 domain; it reads TGMTVAVASS…LITFISGQAF (201 aa). The next 4 membrane-spanning stretches (helical) occupy residues 24-44, 72-92, 96-116, and 201-221; these read MTVA…CLGA, LVIY…GSLF, GFVS…VSAA, and FSFY…SGQA.

The protein belongs to the binding-protein-dependent transport system permease family. HisMQ subfamily.

The protein resides in the cell inner membrane. Functionally, component of the octopine active transport system probably consisting of four subunits: Q, M, P and T. The chain is Octopine transport system permease protein OccQ (occQ) from Rhizobium meliloti (Ensifer meliloti).